Reading from the N-terminus, the 62-residue chain is MSYYGSYYGGLGSGIRGFGNLGYGYGCGCGFGGYGYGSGYGRYGYGYPRPLYYGGYGFSRFY.

Residues 5–56 (GSYYGGLGSGIRGFGNLGYGYGCGCGFGGYGYGSGYGRYGYGYPRPLYYGGY) are 14 X 2 AA repeats of G-[YCGS].

It belongs to the KRTAP type 19 family. As to quaternary structure, interacts with hair keratins. Expressed in skin during two hair growth cycles. Expression restricted to the cortical cells of hair follicles, appearing first in the cortical cells processing the flat nuclei located a few cells above the dermal papilla.

In the hair cortex, hair keratin intermediate filaments are embedded in an interfilamentous matrix, consisting of hair keratin-associated proteins (KRTAP), which are essential for the formation of a rigid and resistant hair shaft through their extensive disulfide bond cross-linking with abundant cysteine residues of hair keratins. The matrix proteins include the high-sulfur and high-glycine-tyrosine keratins. The polypeptide is Keratin-associated protein 19-5 (Krtap19-5) (Mus musculus (Mouse)).